Consider the following 230-residue polypeptide: Cytidylate kinase (230 aa).

10–18 (GPAGSGKST) serves as a coordination point for ATP.

It belongs to the cytidylate kinase family. Type 1 subfamily.

Its subcellular location is the cytoplasm. It carries out the reaction CMP + ATP = CDP + ADP. It catalyses the reaction dCMP + ATP = dCDP + ADP. This chain is Cytidylate kinase, found in Leptospira borgpetersenii serovar Hardjo-bovis (strain JB197).